The sequence spans 108 residues: Large ribosomal subunit protein eL36x (108 aa).

2 disordered regions span residues 13 to 34 and 75 to 108; these read GHVV…KTSK and KLGT…EKKK. The segment covering 75–84 has biased composition (basic residues); it reads KLGTHKRAKR.

This sequence belongs to the eukaryotic ribosomal protein eL36 family.

This Arabidopsis thaliana (Mouse-ear cress) protein is Large ribosomal subunit protein eL36x (RPL36C).